Consider the following 77-residue polypeptide: Putative antitoxin VapB3 (77 aa).

Positions 10–60 form a coiled coil; it reads RRGLKKELEELGINYAEAVRKFLEELVARERRRRALERARALREELRKKGA.

As to quaternary structure, forms a complex with putative toxin VapC3, possibly VapB(2)-VapC(2).

Its function is as follows. Antitoxin component of a type II toxin-antitoxin (TA) system. The chain is Putative antitoxin VapB3 (vAPb3) from Pyrobaculum aerophilum (strain ATCC 51768 / DSM 7523 / JCM 9630 / CIP 104966 / NBRC 100827 / IM2).